A 218-amino-acid polypeptide reads, in one-letter code: uncharacterized protein (218 aa).

The 117-residue stretch at 7 to 123 folds into the Response regulatory domain; it reads RVALADDQPL…ELIDAIRAAA (117 aa). Residue D58 is modified to 4-aspartylphosphate. The HTH luxR-type domain maps to 150-215; it reads AEELAEPFTK…QAVVFAIRNG (66 aa). Residues 174 to 193 constitute a DNA-binding region (H-T-H motif); it reads NEDIAEKLFVSESTVKTHVH.

Post-translationally, phosphorylated by YxjM.

It is found in the cytoplasm. Functionally, probable member of the two-component regulatory system YxjM/YxjL. This is an uncharacterized protein from Bacillus subtilis (strain 168).